The sequence spans 144 residues: Protein cornichon homolog 1 (144 aa).

Residues 1-10 (MAFTFAAFCY) are Cytoplasmic-facing. A helical membrane pass occupies residues 11-31 (MLALLLTATLIFFAIWHIIAF). At 32-56 (DELKTDYKNPIDQCNTLNPLVLPEY) the chain is on the lumenal side. Residues 57 to 77 (LIHAFFCVMFLCAAEWLTLGL) traverse the membrane as a helical segment. The Cytoplasmic segment spans residues 78–122 (NMPLLAYHIWRYMSRPVMSGPGLYDPTTIMNADILAYCQKEGWCK). Residues 123 to 143 (LAFYLLAFFYYLYGMIYVLVS) traverse the membrane as a helical segment. Position 144 (Ser-144) is a topological domain, lumenal.

It belongs to the cornichon family. As to quaternary structure, interacts with AREG immature precursor and with immature TGFA, i.e. with a prosegment and lacking full N-glycosylation, but not with the fully N-glycosylated form. In the Golgi apparatus, may form a complex with GORASP55 and transmembrane TGFA.

It is found in the endoplasmic reticulum membrane. It localises to the golgi apparatus membrane. Its function is as follows. Involved in the selective transport and maturation of TGF-alpha family proteins. This chain is Protein cornichon homolog 1 (CNIH1), found in Pongo abelii (Sumatran orangutan).